We begin with the raw amino-acid sequence, 171 residues long: UPF0312 protein SAR2769 (171 aa).

Belongs to the UPF0312 family.

This chain is UPF0312 protein SAR2769, found in Staphylococcus aureus (strain MRSA252).